The sequence spans 423 residues: Gamma-glutamyl phosphate reductase (423 aa).

It belongs to the gamma-glutamyl phosphate reductase family.

It is found in the cytoplasm. It catalyses the reaction L-glutamate 5-semialdehyde + phosphate + NADP(+) = L-glutamyl 5-phosphate + NADPH + H(+). Its pathway is amino-acid biosynthesis; L-proline biosynthesis; L-glutamate 5-semialdehyde from L-glutamate: step 2/2. Catalyzes the NADPH-dependent reduction of L-glutamate 5-phosphate into L-glutamate 5-semialdehyde and phosphate. The product spontaneously undergoes cyclization to form 1-pyrroline-5-carboxylate. This Magnetococcus marinus (strain ATCC BAA-1437 / JCM 17883 / MC-1) protein is Gamma-glutamyl phosphate reductase.